The chain runs to 99 residues: Turripeptide OL71 (99 aa).

In terms of processing, contains 5 disulfide bonds. Expressed by the venom duct.

The protein localises to the secreted. Its function is as follows. Acts as a neurotoxin by inhibiting an ion channel. This chain is Turripeptide OL71, found in Iotyrris olangoensis (Sea snail).